A 318-amino-acid polypeptide reads, in one-letter code: Homeobox-leucine zipper protein ATHB-4 (318 aa).

Disordered regions lie at residues 1–23 (MGERDDGLGLSLSLGNSQQKEPS) and 128–165 (ARGGDENEAERASCSRGGGSGGSDDEDGGNGDGSRKKL). The segment covering 8–17 (LGLSLSLGNS) has biased composition (low complexity). The segment covering 128-140 (ARGGDENEAERAS) has biased composition (basic and acidic residues). The homeobox DNA-binding region spans 160–219 (GSRKKLRLSKDQALVLEETFKEHSTLNPKQKLALAKQLNLRARQVEVWFQNRRARTKLKQ). Residues 227–248 (LKRCCDNLTEENRRLQKEVSEL) form a leucine-zipper region.

This sequence belongs to the HD-ZIP homeobox family. Class II subfamily.

The protein localises to the nucleus. Probable transcription factor. The chain is Homeobox-leucine zipper protein ATHB-4 (ATHB-4) from Arabidopsis thaliana (Mouse-ear cress).